Consider the following 91-residue polypeptide: DNA-binding protein HU (91 aa).

The protein belongs to the bacterial histone-like protein family. As to quaternary structure, homodimer.

In terms of biological role, histone-like DNA-binding protein which is capable of wrapping DNA to stabilize it, and thus to prevent its denaturation under extreme environmental conditions. The chain is DNA-binding protein HU (hup) from Streptococcus thermophilus.